The sequence spans 157 residues: MSQVILDLQIACADSQGLPTEGDFQRWLEAVLPLFQPVSEVTIRLVDEAESHDLNLTYRGKDKSTNVLSFPFEAPPEIELPLLGDLIICRQVVEKEAIEQEKALLAHWAHMVVHGSLHLLGYDHIDDDEAEEMELIEIEIMHGLGYPDPYISEKDPD.

Positions 114, 118, and 124 each coordinate Zn(2+).

Belongs to the endoribonuclease YbeY family. Zn(2+) serves as cofactor.

The protein localises to the cytoplasm. In terms of biological role, single strand-specific metallo-endoribonuclease involved in late-stage 70S ribosome quality control and in maturation of the 3' terminus of the 16S rRNA. The sequence is that of Endoribonuclease YbeY from Yersinia pseudotuberculosis serotype O:3 (strain YPIII).